A 221-amino-acid chain; its full sequence is 7-cyano-7-deazaguanine synthase (221 aa).

Residue 7-17 participates in ATP binding; that stretch reads LSGGLDSAVSL. Zn(2+) contacts are provided by C192, C200, C203, and C206.

It belongs to the QueC family. Homodimer. It depends on Zn(2+) as a cofactor.

The enzyme catalyses 7-carboxy-7-deazaguanine + NH4(+) + ATP = 7-cyano-7-deazaguanine + ADP + phosphate + H2O + H(+). It participates in purine metabolism; 7-cyano-7-deazaguanine biosynthesis. In terms of biological role, catalyzes the ATP-dependent conversion of 7-carboxy-7-deazaguanine (CDG) to 7-cyano-7-deazaguanine (preQ(0)). In Pelotomaculum thermopropionicum (strain DSM 13744 / JCM 10971 / SI), this protein is 7-cyano-7-deazaguanine synthase.